The chain runs to 321 residues: Probable arabinan endo-1,5-alpha-L-arabinosidase C (321 aa).

Residues 1–20 (MYLYTLILLFLASVNVNAYA) form the signal peptide. The active-site Proton acceptor is the Asp-33. 2 N-linked (GlcNAc...) asparagine glycosylation sites follow: Asn-75 and Asn-192. Glu-200 functions as the Proton donor in the catalytic mechanism. Residue Asn-224 is glycosylated (N-linked (GlcNAc...) asparagine).

It belongs to the glycosyl hydrolase 43 family.

It localises to the secreted. It catalyses the reaction Endohydrolysis of (1-&gt;5)-alpha-arabinofuranosidic linkages in (1-&gt;5)-arabinans.. Its pathway is glycan metabolism; L-arabinan degradation. Functionally, endo-1,5-alpha-L-arabinanase involved in degradation of pectin. Its preferred substrate is linear 1,5-alpha-L-arabinan. The chain is Probable arabinan endo-1,5-alpha-L-arabinosidase C (abnC) from Neosartorya fischeri (strain ATCC 1020 / DSM 3700 / CBS 544.65 / FGSC A1164 / JCM 1740 / NRRL 181 / WB 181) (Aspergillus fischerianus).